Here is a 115-residue protein sequence, read N- to C-terminus: Phosphoribosyl-AMP cyclohydrolase (115 aa).

Asp-80 contributes to the Mg(2+) binding site. Cys-81 is a Zn(2+) binding site. 2 residues coordinate Mg(2+): Asp-82 and Asp-84. The Zn(2+) site is built by Cys-97 and Cys-104.

Belongs to the PRA-CH family. Homodimer. Requires Mg(2+) as cofactor. Zn(2+) serves as cofactor.

It localises to the cytoplasm. The enzyme catalyses 1-(5-phospho-beta-D-ribosyl)-5'-AMP + H2O = 1-(5-phospho-beta-D-ribosyl)-5-[(5-phospho-beta-D-ribosylamino)methylideneamino]imidazole-4-carboxamide. The protein operates within amino-acid biosynthesis; L-histidine biosynthesis; L-histidine from 5-phospho-alpha-D-ribose 1-diphosphate: step 3/9. Its function is as follows. Catalyzes the hydrolysis of the adenine ring of phosphoribosyl-AMP. The polypeptide is Phosphoribosyl-AMP cyclohydrolase (Mycobacterium avium (strain 104)).